Here is a 255-residue protein sequence, read N- to C-terminus: F-box/SPRY domain-containing protein 1 (255 aa).

Positions 3–51 (DPVAALCNYNVLEVIFSYLELEDLSHCSQVCKSWYHFLNDENSDVWRWH) constitute an F-box domain. In terms of domain architecture, B30.2/SPRY spans 61–253 (LKSDLLSSVS…VSMVYLGTPL (193 aa)).

Belongs to the FBXO45/Fsn family. Component of an E3 ubiquitin ligase complex composed of hiw and Fsn.

The protein localises to the synapse. The protein operates within protein modification; protein ubiquitination. In terms of biological role, required in the presynaptic motoneuron to down-regulate the levels of wnd and restrain synaptic terminal growth at the neuromuscular junction (NMJ). This Drosophila erecta (Fruit fly) protein is F-box/SPRY domain-containing protein 1.